A 396-amino-acid polypeptide reads, in one-letter code: ATP-dependent RNA helicase eIF4A (396 aa).

The short motif at 23–51 (YEFDDMNLNEKLLRGVFGYGFNKPSAIQQ) is the Q motif element. Residues 54–223 (IMPIIEGNDV…AKFMQNPVRI (170 aa)) form the Helicase ATP-binding domain. Position 67–74 (67–74 (AQSGTGKT)) interacts with ATP. Positions 171–174 (DEAD) match the DEAD box motif. In terms of domain architecture, Helicase C-terminal spans 234–395 (GIKQFYVNVE…ELPSDIGTLF (162 aa)).

This sequence belongs to the DEAD box helicase family. eIF4A subfamily. Component of the eIF4F complex, which composition varies with external and internal environmental conditions. It is composed of at least eIF4A, eIF4E and eIF4G.

It is found in the cytoplasm. It carries out the reaction ATP + H2O = ADP + phosphate + H(+). Functionally, ATP-dependent RNA helicase which is a subunit of the eIF4F complex involved in cap recognition and is required for mRNA binding to ribosome. In the current model of translation initiation, eIF4A unwinds RNA secondary structures in the 5'-UTR of mRNAs which is necessary to allow efficient binding of the small ribosomal subunit, and subsequent scanning for the initiator codon. The polypeptide is ATP-dependent RNA helicase eIF4A (TIF1) (Candida glabrata (strain ATCC 2001 / BCRC 20586 / JCM 3761 / NBRC 0622 / NRRL Y-65 / CBS 138) (Yeast)).